The primary structure comprises 427 residues: Peptidase B (427 aa).

Residues K195 and D200 each coordinate Mn(2+). K207 is an active-site residue. Mn(2+) is bound by residues D218, D277, and E279. Residue R281 is part of the active site.

This sequence belongs to the peptidase M17 family. In terms of assembly, homohexamer. Mn(2+) is required as a cofactor.

It localises to the cytoplasm. The enzyme catalyses Release of an N-terminal amino acid, Xaa, from a peptide or arylamide. Xaa is preferably Glu or Asp but may be other amino acids, including Leu, Met, His, Cys and Gln.. Its function is as follows. Probably plays an important role in intracellular peptide degradation. This Salmonella dublin (strain CT_02021853) protein is Peptidase B.